The following is a 158-amino-acid chain: Glycosyl-phosphatidylinositol-anchored molecule-like protein (158 aa).

Positions 1–17 are cleaved as a signal peptide; that stretch reads MLLFALLLAMELPLVAA. One can recognise a UPAR/Ly6 domain in the interval 29 to 134; it reads LRCHDCAVIN…DEVTEEELPE (106 aa). 5 disulfides stabilise this stretch: Cys31–Cys55, Cys34–Cys42, Cys48–Cys73, Cys77–Cys104, and Cys105–Cys110.

The protein localises to the cell membrane. In terms of biological role, may play a role in the apoptotic pathway or cell-cycle regulation induced by p53/TP53 after DNA damage. This is Glycosyl-phosphatidylinositol-anchored molecule-like protein (GML) from Homo sapiens (Human).